Reading from the N-terminus, the 89-residue chain is Defensin-like protein 197 (89 aa).

The signal sequence occupies residues 1 to 26; that stretch reads MKFVSVFLVLFIFFLVVLEAPEKIEA. Intrachain disulfides connect Cys-33–Cys-86, Cys-46–Cys-70, Cys-55–Cys-81, and Cys-59–Cys-83.

It belongs to the DEFL family. Protease inhibitor I18 (RTI/MTI-2) subfamily.

It is found in the secreted. This chain is Defensin-like protein 197 (ATTI6), found in Arabidopsis thaliana (Mouse-ear cress).